Here is a 131-residue protein sequence, read N- to C-terminus: Maturin (131 aa).

The segment covering 107–120 (FEEYNADVEEEEPE) has biased composition (acidic residues). The disordered stretch occupies residues 107–131 (FEEYNADVEEEEPEADHQQMGVSQQ).

Belongs to the MTURN family.

Its subcellular location is the cytoplasm. Its function is as follows. Involved in early neuronal development; required for cell cycle exit and differentiation of primary neurons. Cooperates synergistically with pak3 to promote primary neural differentiation within the neural plate. May play a role in promoting megakaryocyte differentiation. In Xenopus laevis (African clawed frog), this protein is Maturin (mturn).